A 172-amino-acid chain; its full sequence is Adenine phosphoribosyltransferase (172 aa).

Belongs to the purine/pyrimidine phosphoribosyltransferase family. As to quaternary structure, homodimer.

It is found in the cytoplasm. The catalysed reaction is AMP + diphosphate = 5-phospho-alpha-D-ribose 1-diphosphate + adenine. The protein operates within purine metabolism; AMP biosynthesis via salvage pathway; AMP from adenine: step 1/1. Functionally, catalyzes a salvage reaction resulting in the formation of AMP, that is energically less costly than de novo synthesis. This chain is Adenine phosphoribosyltransferase, found in Streptococcus mutans serotype c (strain ATCC 700610 / UA159).